Reading from the N-terminus, the 356-residue chain is Tetraacyldisaccharide 4'-kinase (356 aa).

Residue 67-74 coordinates ATP; sequence FVGGTGKT.

This sequence belongs to the LpxK family.

The enzyme catalyses a lipid A disaccharide + ATP = a lipid IVA + ADP + H(+). The protein operates within glycolipid biosynthesis; lipid IV(A) biosynthesis; lipid IV(A) from (3R)-3-hydroxytetradecanoyl-[acyl-carrier-protein] and UDP-N-acetyl-alpha-D-glucosamine: step 6/6. Its function is as follows. Transfers the gamma-phosphate of ATP to the 4'-position of a tetraacyldisaccharide 1-phosphate intermediate (termed DS-1-P) to form tetraacyldisaccharide 1,4'-bis-phosphate (lipid IVA). The chain is Tetraacyldisaccharide 4'-kinase from Herminiimonas arsenicoxydans.